The chain runs to 313 residues: Beta-ribofuranosylphenol 5'-phosphate synthase (313 aa).

Belongs to the beta-RFA-P synthase family. In terms of assembly, homodimer.

It carries out the reaction 5-phospho-alpha-D-ribose 1-diphosphate + 4-hydroxybenzoate + H(+) = 4-(beta-D-ribofuranosyl)phenol 5'-phosphate + CO2 + diphosphate. The catalysed reaction is 4-aminobenzoate + 5-phospho-alpha-D-ribose 1-diphosphate + H(+) = 4-(beta-D-ribofuranosyl)aminobenzene 5'-phosphate + CO2 + diphosphate. It participates in cofactor biosynthesis; 5,6,7,8-tetrahydromethanopterin biosynthesis. In terms of biological role, catalyzes the condensation of 4-hydroxybenzoate (HB) with 5-phospho-alpha-D-ribose 1-diphosphate (PRPP) to produce beta-ribofuranosylphenol 5'-phosphate (beta-RFH-P). Also catalyzes the condensation of 4-aminobenzoate (pABA) with PRPP to produce beta-ribofuranosylaminobenzene 5'-phosphate (beta-RFA-P). In Archaeoglobus fulgidus (strain ATCC 49558 / DSM 4304 / JCM 9628 / NBRC 100126 / VC-16), this protein is Beta-ribofuranosylphenol 5'-phosphate synthase.